The primary structure comprises 151 residues: Myosin light polypeptide 6 (151 aa).

An N-acetylcysteine modification is found at cysteine 2. The 36-residue stretch at 7–42 folds into the EF-hand 1 domain; it reads DQTAEFKEAFQLFDRTGDGKILYSQCGDVMRALGQN. A Phosphoserine modification is found at serine 57. Position 81 is an N6-acetyllysine (lysine 81). EF-hand domains lie at 84–119 and 119–151; these read GTYE…LGEK and KMTE…VLNG.

As to quaternary structure, myosin is a hexamer of 2 heavy chains and 4 light chains. Interacts with SPATA6.

Functionally, regulatory light chain of myosin. Does not bind calcium. The chain is Myosin light polypeptide 6 (Myl6) from Rattus norvegicus (Rat).